Reading from the N-terminus, the 243-residue chain is Derlin-1.2 (243 aa).

Residues 1-20 are Cytoplasmic-facing; that stretch reads MSSPAEYYKSLPPISKAYGT. Residues 21–41 form a helical membrane-spanning segment; that stretch reads LCFFTTVLVRLHILNPLFLYL. Residues 42-54 are Lumenal-facing; sequence YYPRVFKKFEVWR. A helical membrane pass occupies residues 55–75; that stretch reads IFTSFFFLGPFSINFGIRLLM. Residues 76 to 94 are Cytoplasmic-facing; sequence IARYGVMLEKGAFDKRTAD. A helical membrane pass occupies residues 95–115; that stretch reads FLWMMIFGAISLLVLSVIPQL. Over 116-155 the chain is Lumenal; the sequence is NTYVLGLPMVSMLVYVWSRENPNAQINIYGILQLKAFYLP. The helical transmembrane segment at 156 to 176 threads the bilayer; it reads WVMLLLDVIFGSPLMPGLLGI. Residues 177–243 lie on the Cytoplasmic side of the membrane; it reads MVGHLYYYFA…FRGRSYRLNQ (67 aa).

Belongs to the derlin family. Expressed in roots and endosperm.

It is found in the endoplasmic reticulum membrane. Its function is as follows. May be involved in the degradation process of specific misfolded endoplasmic reticulum (ER) luminal proteins. The protein is Derlin-1.2 (DER1.2) of Zea mays (Maize).